We begin with the raw amino-acid sequence, 547 residues long: Methyl-accepting chemotaxis citrate transducer (547 aa).

Residues 1-5 (MKNIK) lie on the Cytoplasmic side of the membrane. Residues 6-29 (VITGVIATLGIFSALLLVTGILFY) traverse the membrane as a helical segment. The Periplasmic portion of the chain corresponds to 30–189 (SAVSSDRLNF…ASDQNQSSFT (160 aa)). Residues 190–213 (QMQWTLGIILLIVLIVLAFIWLGL) traverse the membrane as a helical segment. Residues 214-547 (QRVLLRPLQR…AAEQANWESF (334 aa)) are Cytoplasmic-facing. The region spanning 215-267 (RVLLRPLQRIMAHIQTIADGDLTHEIEAEGRSEMGQLAAGLKTMQQSLIRTVS) is the HAMP domain. Positions 272 to 501 (NADSIYTGAG…ESAAAAAALE (230 aa)) constitute a Methyl-accepting transducer domain. Glutamine 296 carries the post-translational modification Glutamate methyl ester (Gln). Glutamate 303 carries the glutamate methyl ester (Glu) modification. Residue glutamine 310 is modified to Glutamate methyl ester (Gln). The disordered stretch occupies residues 317–336 (QNTDNARQATGLAKTASETA). 2 positions are modified to glutamate methyl ester (Glu): glutamate 492 and glutamate 501. A disordered region spans residues 518-547 (KQPRREASPTTLSKGLTPQPAAEQANWESF).

Belongs to the methyl-accepting chemotaxis (MCP) protein family. Post-translationally, methylation level is increased by citrate and decreased by phenol.

Its subcellular location is the cell inner membrane. Acts as a receptor for citrate and mediates taxis away from phenol. Also mediates an attractant response to metal-citrate complexes. This Salmonella typhimurium (strain LT2 / SGSC1412 / ATCC 700720) protein is Methyl-accepting chemotaxis citrate transducer (tcp).